We begin with the raw amino-acid sequence, 478 residues long: Sulfate adenylyltransferase subunit 1 (478 aa).

The tr-type G domain occupies lysine 24–aspartate 240. The G1 stretch occupies residues glycine 33–serine 40. Position 33 to 40 (glycine 33 to serine 40) interacts with GTP. The segment at glycine 91 to aspartate 95 is G2. Residues aspartate 112–glycine 115 form a G3 region. GTP is bound by residues aspartate 112–histidine 116 and asparagine 167–aspartate 170. The tract at residues asparagine 167–aspartate 170 is G4. Positions serine 206–leucine 208 are G5.

This sequence belongs to the TRAFAC class translation factor GTPase superfamily. Classic translation factor GTPase family. CysN/NodQ subfamily. Heterodimer composed of CysD, the smaller subunit, and CysN.

The enzyme catalyses sulfate + ATP + H(+) = adenosine 5'-phosphosulfate + diphosphate. The protein operates within sulfur metabolism; hydrogen sulfide biosynthesis; sulfite from sulfate: step 1/3. With CysD forms the ATP sulfurylase (ATPS) that catalyzes the adenylation of sulfate producing adenosine 5'-phosphosulfate (APS) and diphosphate, the first enzymatic step in sulfur assimilation pathway. APS synthesis involves the formation of a high-energy phosphoric-sulfuric acid anhydride bond driven by GTP hydrolysis by CysN coupled to ATP hydrolysis by CysD. The chain is Sulfate adenylyltransferase subunit 1 from Aliivibrio fischeri (strain MJ11) (Vibrio fischeri).